The sequence spans 316 residues: MGLQTTKKITPFLTFDRQQWAKLRKSVPLKLTEQDLKPLLSFNEELSLEEVSTIYLPLARLINYYIEENIKRQTVLHRFLGVKSPKVPYIISLAGSVSVGKSTSARILQALLCQWPVERKVDLITTDGFLYPLAILQAKNLLNRKGFPESYDIHRLIKFVSDLKSGERNIKAPIYSHLTYDIIPDRYSVVDQPEIVILEGLNVLQSGMNYPSSPHNVFVSDFVDFSIYVDADEALLKSWYIHRFLKFRCSAFSDPNSYFHHYAKLSEEQAVKTATTIWDEINGLNLKQNIVPSRERADLILVKGEDHAIQTVKLRK.

Residue 95–102 (GSVSVGKS) participates in ATP binding.

Belongs to the prokaryotic pantothenate kinase family.

It localises to the cytoplasm. The catalysed reaction is (R)-pantothenate + ATP = (R)-4'-phosphopantothenate + ADP + H(+). Its pathway is cofactor biosynthesis; coenzyme A biosynthesis; CoA from (R)-pantothenate: step 1/5. In Haemophilus ducreyi (strain 35000HP / ATCC 700724), this protein is Pantothenate kinase.